The primary structure comprises 93 residues: SH3 domain-binding glutamic acid-rich-like protein 3 (93 aa).

S2 bears the N-acetylserine mark. In terms of domain architecture, Glutaredoxin spans 2–93 (SGLRVYSTSV…DTLQEFLKLA (92 aa)). A glycan (O-linked (GalNAc...) threonine) is linked at T9.

The protein belongs to the SH3BGR family. In terms of assembly, homodimer. Interacts with MYO1C (via its IQ motifs); the interaction is dependent on calcium and takes place at membrane ruffles. May be glycosylated.

Its subcellular location is the cytoplasm. It is found in the cytosol. The protein localises to the cell projection. The protein resides in the ruffle membrane. It localises to the nucleus. Its function is as follows. Could act as a modulator of glutaredoxin biological activity. May play a role in cytoskeleton organization. The sequence is that of SH3 domain-binding glutamic acid-rich-like protein 3 (Sh3bgrl3) from Mus musculus (Mouse).